The primary structure comprises 48 residues: MAVYRCGKCWKTFTDEQLKVLPGVRCPYCGYKIIFMVRKPTIKIVKAI.

Positions 9, 26, and 29 each coordinate Zn(2+).

The protein belongs to the archaeal Rpo12/eukaryotic RPC10 RNA polymerase subunit family. As to quaternary structure, part of the RNA polymerase complex. Requires Zn(2+) as cofactor.

The protein localises to the cytoplasm. The enzyme catalyses RNA(n) + a ribonucleoside 5'-triphosphate = RNA(n+1) + diphosphate. In terms of biological role, DNA-dependent RNA polymerase (RNAP) catalyzes the transcription of DNA into RNA using the four ribonucleoside triphosphates as substrates. The protein is DNA-directed RNA polymerase subunit Rpo12 of Saccharolobus islandicus (strain Y.N.15.51 / Yellowstone #2) (Sulfolobus islandicus).